A 62-amino-acid chain; its full sequence is MARSRRHSRSRSRSRNQCQRRRRRTYNRRRTMREKPRHSRRRRVRRRGCSCRRCSRRRRRRC.

The segment at 1-62 is disordered; sequence MARSRRHSRS…RCSRRRRRRC (62 aa).

This sequence belongs to the protamine P1 family. Testis.

It is found in the nucleus. Its subcellular location is the chromosome. Functionally, protamines substitute for histones in the chromatin of sperm during the haploid phase of spermatogenesis. They compact sperm DNA into a highly condensed, stable and inactive complex. The polypeptide is Sperm protamine P1 (PRM1) (Planigale ingrami (Long-tailed planigale)).